The following is a 423-amino-acid chain: 4-hydroxy-3-methylbut-2-en-1-yl diphosphate synthase (flavodoxin) (423 aa).

[4Fe-4S] cluster is bound by residues Cys-307, Cys-310, Cys-353, and Glu-360.

Belongs to the IspG family. It depends on [4Fe-4S] cluster as a cofactor.

It carries out the reaction (2E)-4-hydroxy-3-methylbut-2-enyl diphosphate + oxidized [flavodoxin] + H2O + 2 H(+) = 2-C-methyl-D-erythritol 2,4-cyclic diphosphate + reduced [flavodoxin]. It participates in isoprenoid biosynthesis; isopentenyl diphosphate biosynthesis via DXP pathway; isopentenyl diphosphate from 1-deoxy-D-xylulose 5-phosphate: step 5/6. Functionally, converts 2C-methyl-D-erythritol 2,4-cyclodiphosphate (ME-2,4cPP) into 1-hydroxy-2-methyl-2-(E)-butenyl 4-diphosphate. This chain is 4-hydroxy-3-methylbut-2-en-1-yl diphosphate synthase (flavodoxin), found in Brucella anthropi (strain ATCC 49188 / DSM 6882 / CCUG 24695 / JCM 21032 / LMG 3331 / NBRC 15819 / NCTC 12168 / Alc 37) (Ochrobactrum anthropi).